The following is a 239-amino-acid chain: Ribose-5-phosphate isomerase A (239 aa).

Substrate is bound by residues 39–42, 95–98, and 108–111; these read SGST, DGAD, and KGGG. Glutamate 117 (proton acceptor) is an active-site residue. Lysine 135 lines the substrate pocket.

The protein belongs to the ribose 5-phosphate isomerase family. In terms of assembly, homodimer.

The catalysed reaction is aldehydo-D-ribose 5-phosphate = D-ribulose 5-phosphate. The protein operates within carbohydrate degradation; pentose phosphate pathway; D-ribose 5-phosphate from D-ribulose 5-phosphate (non-oxidative stage): step 1/1. Catalyzes the reversible conversion of ribose-5-phosphate to ribulose 5-phosphate. This is Ribose-5-phosphate isomerase A from Chlamydia muridarum (strain MoPn / Nigg).